The primary structure comprises 413 residues: uncharacterized protein (413 aa).

Transmembrane regions (helical) follow at residues 42-62 (FLGGFSSFSILYCVQSILPVF), 75-95 (LSLSAATATMSIGTLFIGPLS), 109-129 (LIAAVLTIICSISNNWTVIVF), 133-153 (LTGLALSGVVAVAMTYIVEEV), 157-179 (SVSFCMGLYISGNTIGGCSGRIL), 191-211 (IAFIVIGFFSLMSSCLFLYFL), 238-258 (PTLLILFAIGFMLMGSFITIF), 265-285 (LMLSPFFLSSSNIGFLSIIYL), 304-324 (SSILRIALLLMILGLLMTQYN), 326-346 (IFIIILGLVIFSSGFFASHSI), 362-382 (ATSLYLFFYYLGSSIFGTFGG), and 383-403 (FFWFYLKWIGISSFIIIILIF).

Belongs to the major facilitator superfamily.

It localises to the cell membrane. This is an uncharacterized protein from Buchnera aphidicola subsp. Schizaphis graminum (strain Sg).